The chain runs to 255 residues: 4-hydroxy-tetrahydrodipicolinate reductase (255 aa).

NAD(+) contacts are provided by residues glycine 9 to methionine 14, aspartate 35, glycine 89 to threonine 91, and alanine 115 to phenylalanine 118. The active-site Proton donor/acceptor is the histidine 145. Histidine 146 serves as a coordination point for (S)-2,3,4,5-tetrahydrodipicolinate. Lysine 149 serves as the catalytic Proton donor. Glycine 155–threonine 156 lines the (S)-2,3,4,5-tetrahydrodipicolinate pocket.

This sequence belongs to the DapB family.

It is found in the cytoplasm. The enzyme catalyses (S)-2,3,4,5-tetrahydrodipicolinate + NAD(+) + H2O = (2S,4S)-4-hydroxy-2,3,4,5-tetrahydrodipicolinate + NADH + H(+). It carries out the reaction (S)-2,3,4,5-tetrahydrodipicolinate + NADP(+) + H2O = (2S,4S)-4-hydroxy-2,3,4,5-tetrahydrodipicolinate + NADPH + H(+). It participates in amino-acid biosynthesis; L-lysine biosynthesis via DAP pathway; (S)-tetrahydrodipicolinate from L-aspartate: step 4/4. Its function is as follows. Catalyzes the conversion of 4-hydroxy-tetrahydrodipicolinate (HTPA) to tetrahydrodipicolinate. This is 4-hydroxy-tetrahydrodipicolinate reductase from Streptococcus pneumoniae serotype 4 (strain ATCC BAA-334 / TIGR4).